A 287-amino-acid chain; its full sequence is Pyridoxal kinase PdxY (287 aa).

Substrate-binding positions include Ser9 and 44–45 (MQ). Residues Asp111, Ala142, Glu147, and Lys180 each contribute to the ATP site. Asp221 lines the substrate pocket.

Belongs to the pyridoxine kinase family. PdxY subfamily. In terms of assembly, homodimer. It depends on Mg(2+) as a cofactor.

The catalysed reaction is pyridoxal + ATP = pyridoxal 5'-phosphate + ADP + H(+). It functions in the pathway cofactor metabolism; pyridoxal 5'-phosphate salvage; pyridoxal 5'-phosphate from pyridoxal: step 1/1. Functionally, pyridoxal kinase involved in the salvage pathway of pyridoxal 5'-phosphate (PLP). Catalyzes the phosphorylation of pyridoxal to PLP. The polypeptide is Pyridoxal kinase PdxY (Burkholderia thailandensis (strain ATCC 700388 / DSM 13276 / CCUG 48851 / CIP 106301 / E264)).